Consider the following 116-residue polypeptide: Protein Rev (116 aa).

2 positions are modified to phosphoserine; by host CK2: Ser5 and Ser8. The segment at 18–26 (LIKFLYQSN) is homomultimerization. The disordered stretch occupies residues 23–48 (YQSNPPPSPEGTRQARRNRRRRWRAR). The short motif at 34 to 50 (TRQARRNRRRRWRARQR) is the Nuclear localization signal and RNA-binding (RRE) element. The segment covering 36 to 48 (QARRNRRRRWRAR) has biased composition (basic residues). A Nuclear export signal and binding to XPO1 motif is present at residues 73 to 84 (LQLPPLERLNLN). The disordered stretch occupies residues 90–116 (GTSGTQGVGSPQIPVEPPAVLESGTEE). Residues Ser92 and Ser99 each carry the phosphoserine; by host modification.

Belongs to the HIV-1 REV protein family. As to quaternary structure, homomultimer; when bound to the RRE. Multimeric assembly is essential for activity and may involve XPO1. Binds to human KPNB1, XPO1, TNPO1, RANBP5 and IPO7. Interacts with the viral Integrase. Interacts with human KHDRBS1. Interacts with human NAP1; this interaction decreases Rev multimerization and stimulates its activity. Interacts with human DEAD-box helicases DDX3 and DDX24; these interactions may serve for viral RNA export to the cytoplasm and packaging, respectively. Interacts with human PSIP1; this interaction may inhibit HIV-1 DNA integration by promoting dissociation of the Integrase-LEDGF/p75 complex. Post-translationally, asymmetrically arginine dimethylated at one site by host PRMT6. Methylation impairs the RNA-binding activity and export of viral RNA from the nucleus to the cytoplasm. Phosphorylated by protein kinase CK2. Presence of, and maybe binding to the N-terminus of the regulatory beta subunit of CK2 is necessary for CK2-mediated Rev's phosphorylation.

It is found in the host nucleus. The protein resides in the host nucleolus. Its subcellular location is the host cytoplasm. Functionally, escorts unspliced or incompletely spliced viral pre-mRNAs (late transcripts) out of the nucleus of infected cells. These pre-mRNAs carry a recognition sequence called Rev responsive element (RRE) located in the env gene, that is not present in fully spliced viral mRNAs (early transcripts). This function is essential since most viral proteins are translated from unspliced or partially spliced pre-mRNAs which cannot exit the nucleus by the pathway used by fully processed cellular mRNAs. Rev itself is translated from a fully spliced mRNA that readily exits the nucleus. Rev's nuclear localization signal (NLS) binds directly to KPNB1/Importin beta-1 without previous binding to KPNA1/Importin alpha-1. KPNB1 binds to the GDP bound form of RAN (Ran-GDP) and targets Rev to the nucleus. In the nucleus, the conversion from Ran-GDP to Ran-GTP dissociates Rev from KPNB1 and allows Rev's binding to the RRE in viral pre-mRNAs. Rev multimerization on the RRE via cooperative assembly exposes its nuclear export signal (NES) to the surface. Rev can then form a complex with XPO1/CRM1 and Ran-GTP, leading to nuclear export of the complex. Conversion from Ran-GTP to Ran-GDP mediates dissociation of the Rev/RRE/XPO1/RAN complex, so that Rev can return to the nucleus for a subsequent round of export. Beside KPNB1, also seems to interact with TNPO1/Transportin-1, RANBP5/IPO5 and IPO7/RANBP7 for nuclear import. The nucleoporin-like HRB/RIP is an essential cofactor that probably indirectly interacts with Rev to release HIV RNAs from the perinuclear region to the cytoplasm. This is Protein Rev from Homo sapiens (Human).